The primary structure comprises 497 residues: Histone-lysine N-methyltransferase ASHR3 (497 aa).

The PHD-type zinc finger occupies 118-186; that stretch reads MVDCLVCHKP…QWRCVKCPMA (69 aa). In terms of domain architecture, AWS spans 283-326; the sequence is DGVGCTNCGPNCDRSCVCRVQCISCSKGCSCPESCGNRPFRKEK. The 118-residue stretch at 326–443 folds into the SET domain; sequence KKIKIVKTEH…AGEPLTYDYR (118 aa). Residues 449-465 form the Post-SET domain; the sequence is PEVKCNCGSENCQGYLG.

The protein belongs to the class V-like SAM-binding methyltransferase superfamily. Histone-lysine methyltransferase family. SET2 subfamily. As to quaternary structure, interacts with AMS/bHLH21 by its SET domain and PHD finger. Expressed in roots, flowers and buds, the anther and in stamen filaments.

The protein resides in the nucleus. Its subcellular location is the chromosome. It catalyses the reaction L-lysyl-[histone] + S-adenosyl-L-methionine = N(6)-methyl-L-lysyl-[histone] + S-adenosyl-L-homocysteine + H(+). Functionally, histone methyltransferase. Involved in stamen development. The sequence is that of Histone-lysine N-methyltransferase ASHR3 (ASHR3) from Arabidopsis thaliana (Mouse-ear cress).